Reading from the N-terminus, the 260-residue chain is uncharacterized protein (260 aa).

This is an uncharacterized protein from Methanocaldococcus jannaschii (strain ATCC 43067 / DSM 2661 / JAL-1 / JCM 10045 / NBRC 100440) (Methanococcus jannaschii).